The following is an 84-amino-acid chain: Small ribosomal subunit protein uS17 (84 aa).

The protein belongs to the universal ribosomal protein uS17 family. As to quaternary structure, part of the 30S ribosomal subunit.

One of the primary rRNA binding proteins, it binds specifically to the 5'-end of 16S ribosomal RNA. The polypeptide is Small ribosomal subunit protein uS17 (Photobacterium profundum (strain SS9)).